A 162-amino-acid chain; its full sequence is Urease accessory protein UreE 1 (162 aa).

The tract at residues 143–162 (SGGHQHHHGHDHDHHHPDHE) is disordered. Basic and acidic residues predominate over residues 152-162 (HDHDHHHPDHE).

It belongs to the UreE family.

The protein localises to the cytoplasm. In terms of biological role, involved in urease metallocenter assembly. Binds nickel. Probably functions as a nickel donor during metallocenter assembly. The chain is Urease accessory protein UreE 1 from Brucella suis biovar 1 (strain 1330).